Reading from the N-terminus, the 1203-residue chain is MTRSPPLRELPPSYTPPARTAAPQILAGSLKAPLWLRAYFQGLLFSLGCGIQRHCGKVLFLGLLAFGALALGLRMAIIETNLEQLWVEVGSRVSQELHYTKEKLGEEAAYTSQMLIQTARQEGENILTPEALGLHLQAALTASKVQVSLYGKSWDLNKICYKSGVPLIENGMIERMIEKLFPCVILTPLDCFWEGAKLQGGSAYLPGRPDIQWTNLDPEQLLEELGPFASLEGFRELLDKAQVGQAYVGRPCLHPDDLHCPPSAPNHHSRQAPNVAHELSGGCHGFSHKFMHWQEELLLGGMARDPQGELLRAEALQSTFLLMSPRQLYEHFRGDYQTHDIGWSEEQASTVLQAWQRRFVQLAQEALPENASQQIHAFSSTTLDDILHAFSEVSAARVVGGYLLMLAYACVTMLRWDCAQSQGSVGLAGVLLVALAVASGLGLCALLGITFNAATTQVLPFLALGIGVDDVFLLAHAFTEALPGTPLQERMGECLQRTGTSVVLTSINNMAAFLMAALVPIPALRAFSLQAAIVVGCTFVAVMLVFPAILSLDLRRRHCQRLDVLCCFSSPCSAQVIQILPQELGDGTVPVGIAHLTATVQAFTHCEASSQHVVTILPPQAHLVPPPSDPLGSELFSPGGSTRDLLGQEEETRQKAACKSLPCARWNLAHFARYQFAPLLLQSHAKAIVLVLFGALLGLSLYGATLVQDGLALTDVVPRGTKEHAFLSAQLRYFSLYEVALVTQGGFDYAHSQRALFDLHQRFSSLKAVLPPPATQAPRTWLHYYRNWLQGIQAAFDQDWASGRITRHSYRNGSEDGALAYKLLIQTGDAQEPLDFSQLTTRKLVDREGLIPPELFYMGLTVWVSSDPLGLAASQANFYPPPPEWLHDKYDTTGENLRIPPAQPLEFAQFPFLLRGLQKTADFVEAIEGARAACAEAGQAGVHAYPSGSPFLFWEQYLGLRRCFLLAVCILLVCTFLVCALLLLNPWTAGLIVLVLAMMTVELFGIMGFLGIKLSAIPVVILVASVGIGVEFTVHVALGFLTTQGSRNLRAAHALEHTFAPVTDGAISTLLGLLMLAGSHFDFIVRYFFAALTVLTLLGLLHGLVLLPVLLSILGPPPEVIQMYKESPEILSPPAPQGGGLRWGASSSLPQSFARVTTSMTVAIHPPPLPGAYIHPAPDEPPWSPAATSSGNLSSRGPGPATG.

Topologically, residues 1 to 57 (MTRSPPLRELPPSYTPPARTAAPQILAGSLKAPLWLRAYFQGLLFSLGCGIQRHCGK) are cytoplasmic. Residues 58-78 (VLFLGLLAFGALALGLRMAII) form a helical membrane-spanning segment. Over 79-392 (ETNLEQLWVE…LDDILHAFSE (314 aa)) the chain is Extracellular. Residue asparagine 370 is glycosylated (N-linked (GlcNAc...) asparagine). The helical transmembrane segment at 393–413 (VSAARVVGGYLLMLAYACVTM) threads the bilayer. Residues 394–552 (SAARVVGGYL…MLVFPAILSL (159 aa)) form the SSD domain. Residues 414 to 428 (LRWDCAQSQGSVGLA) are Cytoplasmic-facing. The chain crosses the membrane as a helical span at residues 429–449 (GVLLVALAVASGLGLCALLGI). Over 450 to 457 (TFNAATTQ) the chain is Extracellular. The chain crosses the membrane as a helical span at residues 458–478 (VLPFLALGIGVDDVFLLAHAF). At 479 to 501 (TEALPGTPLQERMGECLQRTGTS) the chain is on the cytoplasmic side. The chain crosses the membrane as a helical span at residues 502–522 (VVLTSINNMAAFLMAALVPIP). The Extracellular segment spans residues 523–531 (ALRAFSLQA). A helical membrane pass occupies residues 532 to 552 (AIVVGCTFVAVMLVFPAILSL). Topologically, residues 553 to 686 (DLRRRHCQRL…APLLLQSHAK (134 aa)) are cytoplasmic. Residues 687–707 (AIVLVLFGALLGLSLYGATLV) traverse the membrane as a helical segment. Residues 708-963 (QDGLALTDVV…WEQYLGLRRC (256 aa)) lie on the Extracellular side of the membrane. N-linked (GlcNAc...) asparagine glycosylation is present at asparagine 812. The helical transmembrane segment at 964 to 984 (FLLAVCILLVCTFLVCALLLL) threads the bilayer. The Cytoplasmic segment spans residues 985–991 (NPWTAGL). A helical membrane pass occupies residues 992–1012 (IVLVLAMMTVELFGIMGFLGI). Residue lysine 1013 is a topological domain, extracellular. Residues 1014 to 1034 (LSAIPVVILVASVGIGVEFTV) form a helical membrane-spanning segment. Topologically, residues 1035 to 1064 (HVALGFLTTQGSRNLRAAHALEHTFAPVTD) are cytoplasmic. The helical transmembrane segment at 1065–1085 (GAISTLLGLLMLAGSHFDFIV) threads the bilayer. Residues 1086-1093 (RYFFAALT) are Extracellular-facing. A helical membrane pass occupies residues 1094 to 1114 (VLTLLGLLHGLVLLPVLLSIL). Residues 1115 to 1203 (GPPPEVIQMY…SSRGPGPATG (89 aa)) are Cytoplasmic-facing. The segment at 1171-1203 (GAYIHPAPDEPPWSPAATSSGNLSSRGPGPATG) is disordered. Polar residues predominate over residues 1186-1195 (AATSSGNLSS).

It belongs to the patched family.

It localises to the membrane. Functionally, plays a role in the control of cellular growth. May have a role in epidermal development. May act as a receptor for Sonic hedgehog (SHH). In Homo sapiens (Human), this protein is Protein patched homolog 2 (PTCH2).